A 287-amino-acid polypeptide reads, in one-letter code: 4-hydroxybenzoate octaprenyltransferase (287 aa).

9 helical membrane-spanning segments follow: residues 22–42 (IGTL…AQGF), 45–65 (LGVL…GCVI), 91–111 (TSTE…LLVL), 114–134 (NSLT…YPFM), 139–159 (QLPQ…AFAA), 161–181 (ANAL…WTIA), 212–232 (IIIA…GWLE), 236–256 (WIYF…QLQI), and 267–287 (AFLD…LGYL).

The protein belongs to the UbiA prenyltransferase family. It depends on Mg(2+) as a cofactor.

The protein localises to the cell inner membrane. The catalysed reaction is all-trans-octaprenyl diphosphate + 4-hydroxybenzoate = 4-hydroxy-3-(all-trans-octaprenyl)benzoate + diphosphate. It functions in the pathway cofactor biosynthesis; ubiquinone biosynthesis. Functionally, catalyzes the prenylation of para-hydroxybenzoate (PHB) with an all-trans polyprenyl group. Mediates the second step in the final reaction sequence of ubiquinone-8 (UQ-8) biosynthesis, which is the condensation of the polyisoprenoid side chain with PHB, generating the first membrane-bound Q intermediate 3-octaprenyl-4-hydroxybenzoate. This is 4-hydroxybenzoate octaprenyltransferase from Psychromonas ingrahamii (strain DSM 17664 / CCUG 51855 / 37).